The chain runs to 300 residues: Glutamyl-Q tRNA(Asp) synthetase (300 aa).

Residues 14–18 (RFAPT) and glutamate 50 contribute to the L-glutamate site. Positions 17–27 (PTPSGFLHFGS) match the 'HIGH' region motif. Positions 106, 108, 120, and 124 each coordinate Zn(2+). 2 residues coordinate L-glutamate: tyrosine 177 and arginine 195. Positions 233–237 (KLGKS) match the 'KMSKS' region motif. Lysine 236 serves as a coordination point for ATP.

Belongs to the class-I aminoacyl-tRNA synthetase family. GluQ subfamily. Zn(2+) is required as a cofactor.

In terms of biological role, catalyzes the tRNA-independent activation of glutamate in presence of ATP and the subsequent transfer of glutamate onto a tRNA(Asp). Glutamate is transferred on the 2-amino-5-(4,5-dihydroxy-2-cyclopenten-1-yl) moiety of the queuosine in the wobble position of the QUC anticodon. The sequence is that of Glutamyl-Q tRNA(Asp) synthetase from Pseudomonas putida (strain ATCC 47054 / DSM 6125 / CFBP 8728 / NCIMB 11950 / KT2440).